The sequence spans 120 residues: Putative monooxygenase GME11364 (120 aa).

The 91-residue stretch at 9–99 (VSVHIRLTVD…ILLKPHEVEL (91 aa)) folds into the ABM domain.

It belongs to the LsrG family.

Its pathway is secondary metabolite biosynthesis. Putative monooxygenase; part of the gene cluster that mediates the biosynthesis of dibenzodioxocinones such as pestalotiollide B, a novel class of inhibitors against cholesterol ester transfer protein (CEPT). The biosynthesis initiates from condensation of acetate and malonate units catalyzed by the non-reducing PKS pks8/GME11356. Pks8/GME11356 lacks a thioesterase (TE) domain, which is important to the cyclizing of the third ring of atrochrysone carboxylic acid, and the esterase GME11355 might play the role of TE and catalyzes the cyclization reaction of the C ring. The lactamase-like protein GME11357 (or other beta-lactamases in Pestalotiopsis microspora) probably hydrolyzes the thioester bond between the ACP of pks8/GME11356 and the intermediate to release atrochrysone carboxylic acid, which is spontaneously dehydrates to form endocrocin anthrone. Endocrocin anthrone is further converted to emodin via the endocrocin intermediate. Emodin is then oxidized by several enzymes such as the Baeyer-Villiger oxidase GME11358, the oxidoreductase GME11367, the short chain dehydrogenase/reductase GME11373, as well as by other oxidoreductases from the cluster, to modify the A and C rings and open the B ring, and finally yield monodictyphenone. The prenyltransferase GME11375 may catalyze the addition reaction between the C5 side chains and the carbon bone of dibenzodioxocinones. The remaining biochemical reactions to the final product dibenzodioxocinones should be methylation catalyzed by methyltransferase GME11366 and reduction and lactonization reaction catalyzed by a series of oxidordeuctases. This is Putative monooxygenase GME11364 from Pestalotiopsis microspora.